Consider the following 246-residue polypeptide: Probable transcriptional regulatory protein APP7_1210 (246 aa).

It belongs to the TACO1 family.

The protein resides in the cytoplasm. The chain is Probable transcriptional regulatory protein APP7_1210 from Actinobacillus pleuropneumoniae serotype 7 (strain AP76).